Consider the following 349-residue polypeptide: MPMPPDDSALSLLPDHPLAAHNTFGIAARARFAARITQAAQFEALHRDPRLANLPQLVLGGGSNIVFTRDFDGVVLLDEIAGRRVVREDDDAWYVEAGGGENWHAFVAWTLEHGMPGLENLALIPGTVGAAPIQNIGAYGLEMKAYFDSLVAVELATGRRERFDAARCAFGYRDSFFKREGRGRFAIVAVTFRLPKQWMPRLGYADVTRELDARGITPEAATPRDVFDAVVAIRRAKLPDPLVLGNAGSFFKNPVIDAAQFDALRARAPEVVSYPQPDGQVKLAAGWLIDRCGWKGRALGAAAVHDRQALVLVNRGGATGADVLALARAIQADVRAQFGVELEAEPVCL.

An FAD-binding PCMH-type domain is found at 25–197; that stretch reads GIAARARFAA…VAVTFRLPKQ (173 aa). The active site involves R173. The active-site Proton donor is S249. Residue E345 is part of the active site.

This sequence belongs to the MurB family. The cofactor is FAD.

The protein resides in the cytoplasm. It catalyses the reaction UDP-N-acetyl-alpha-D-muramate + NADP(+) = UDP-N-acetyl-3-O-(1-carboxyvinyl)-alpha-D-glucosamine + NADPH + H(+). Its pathway is cell wall biogenesis; peptidoglycan biosynthesis. In terms of biological role, cell wall formation. The protein is UDP-N-acetylenolpyruvoylglucosamine reductase of Burkholderia orbicola (strain MC0-3).